Here is a 255-residue protein sequence, read N- to C-terminus: Large ribosomal subunit protein uL4 (255 aa).

This sequence belongs to the universal ribosomal protein uL4 family. In terms of assembly, part of the 50S ribosomal subunit.

In terms of biological role, one of the primary rRNA binding proteins, this protein initially binds near the 5'-end of the 23S rRNA. It is important during the early stages of 50S assembly. It makes multiple contacts with different domains of the 23S rRNA in the assembled 50S subunit and ribosome. Forms part of the polypeptide exit tunnel. The sequence is that of Large ribosomal subunit protein uL4 from Thermococcus kodakarensis (strain ATCC BAA-918 / JCM 12380 / KOD1) (Pyrococcus kodakaraensis (strain KOD1)).